We begin with the raw amino-acid sequence, 544 residues long: Chaperonin GroEL (544 aa).

ATP-binding positions include 30–33 (TLGP), K51, 87–91 (DGTTT), G415, 479–481 (NAA), and D495. Over residues 525-537 (PQDTPATAAAPDM) the composition is skewed to low complexity. The disordered stretch occupies residues 525 to 544 (PQDTPATAAAPDMGGMGGMM).

Belongs to the chaperonin (HSP60) family. As to quaternary structure, forms a cylinder of 14 subunits composed of two heptameric rings stacked back-to-back. Interacts with the co-chaperonin GroES.

It localises to the cytoplasm. The enzyme catalyses ATP + H2O + a folded polypeptide = ADP + phosphate + an unfolded polypeptide.. Its function is as follows. Together with its co-chaperonin GroES, plays an essential role in assisting protein folding. The GroEL-GroES system forms a nano-cage that allows encapsulation of the non-native substrate proteins and provides a physical environment optimized to promote and accelerate protein folding. This is Chaperonin GroEL from Ruthia magnifica subsp. Calyptogena magnifica.